Reading from the N-terminus, the 327-residue chain is DNA-directed RNA polymerase subunit alpha (327 aa).

The segment at 1-243 is alpha N-terminal domain (alpha-NTD); sequence MEKFLKYEIK…EHLNPIVNVN (243 aa). The alpha C-terminal domain (alpha-CTD) stretch occupies residues 260-327; the sequence is RVRSFAKQIE…VHELGLKLRS (68 aa).

This sequence belongs to the RNA polymerase alpha chain family. Homodimer. The RNAP catalytic core consists of 2 alpha, 1 beta, 1 beta' and 1 omega subunit. When a sigma factor is associated with the core the holoenzyme is formed, which can initiate transcription.

It catalyses the reaction RNA(n) + a ribonucleoside 5'-triphosphate = RNA(n+1) + diphosphate. In terms of biological role, DNA-dependent RNA polymerase catalyzes the transcription of DNA into RNA using the four ribonucleoside triphosphates as substrates. The polypeptide is DNA-directed RNA polymerase subunit alpha (Mycoplasma pneumoniae (strain ATCC 29342 / M129 / Subtype 1) (Mycoplasmoides pneumoniae)).